The primary structure comprises 283 residues: Bifunctional protein FolD (283 aa).

NADP(+)-binding positions include G166–S168 and S191.

It belongs to the tetrahydrofolate dehydrogenase/cyclohydrolase family. In terms of assembly, homodimer.

The catalysed reaction is (6R)-5,10-methylene-5,6,7,8-tetrahydrofolate + NADP(+) = (6R)-5,10-methenyltetrahydrofolate + NADPH. It catalyses the reaction (6R)-5,10-methenyltetrahydrofolate + H2O = (6R)-10-formyltetrahydrofolate + H(+). Its pathway is one-carbon metabolism; tetrahydrofolate interconversion. Catalyzes the oxidation of 5,10-methylenetetrahydrofolate to 5,10-methenyltetrahydrofolate and then the hydrolysis of 5,10-methenyltetrahydrofolate to 10-formyltetrahydrofolate. This Pediococcus pentosaceus (strain ATCC 25745 / CCUG 21536 / LMG 10740 / 183-1w) protein is Bifunctional protein FolD.